The primary structure comprises 7094 residues: Replicase polyprotein 1ab (7094 aa).

The region spanning Pro-54–Gly-196 is the CoV Nsp1 globular domain. The BetaCoV Nsp1 C-terminal domain occupies Phe-216–Gly-246. Positions Leu-250–Tyr-519 constitute a CoV Nsp2 N-terminal domain. Positions 392, 397, 413, and 416 each coordinate Zn(2+). The segment at Cys-392–Cys-416 is C4. A CoV Nsp2 middle domain is found at Cys-524 to Val-713. One can recognise a CoV Nsp2 C-terminal domain in the interval Arg-733 to Ala-851. The Ubiquitin-like 1 domain occupies Arg-853–Asp-966. The Peptidase C16 1 domain maps to Asp-1036–Thr-1274. The active-site For PL1-PRO activity is Cys-1074. Cys-1151, Cys-1154, Cys-1177, and Cys-1179 together coordinate Zn(2+). A C4-type 1 zinc finger spans residues Cys-1151–Cys-1179. Residues His-1225 and Asp-1236 each act as for PL1-PRO activity in the active site. One can recognise a Macro domain in the interval Pro-1275 to Val-1435. The DPUP domain occupies Asp-1491 to Asp-1563. Positions Leu-1562–Gln-1617 constitute a Ubiquitin-like 2 domain. The region spanning Ser-1631–Gln-1892 is the Peptidase C16 2 domain. The active-site For PL2-PRO activity is the Cys-1671. Residues Cys-1749, Cys-1751, Cys-1783, and Cys-1785 each coordinate Zn(2+). A C4-type 2 zinc finger spans residues Cys-1749–Cys-1785. Residues His-1828 and Asp-1842 each act as for PL2-PRO activity in the active site. The region spanning Ile-1906–Asp-2007 is the Nucleic acid-binding domain. The G2M domain occupies Asp-2020 to Glu-2169. 3 consecutive transmembrane segments (helical) span residues Ile-2138–Ile-2158, Ala-2199–Phe-2219, and Ile-2227–Leu-2247. The HD1 stretch occupies residues Ile-2138–Phe-2385. Residues Gly-2235–Asp-2296 form the 3Ecto domain. 2 disulfides stabilise this stretch: Cys-2251–Cys-2275 and Cys-2266–Cys-2272. Helical transmembrane passes span Leu-2313 to Ile-2333, Leu-2343 to Leu-2363, and Ala-2365 to Phe-2385. Positions Ser-2383–Asp-2473 are Y1. In terms of domain architecture, CoV Nsp3 Y spans Ser-2383–Gly-2750. Residues His-2387, Cys-2392, Cys-2397, Cys-2400, Cys-2433, His-2436, Cys-2440, and Cys-2443 each contribute to the Zn(2+) site. The tract at residues His-2387–Cys-2400 is ZF1. A ZF2 region spans residues Cys-2433 to Cys-2443. The interval Val-2474–Ala-2566 is Y2. The coV-Y stretch occupies residues Val-2474–Gly-2750. A Y3 region spans residues Asn-2567 to Gly-2649. The Y4 stretch occupies residues Leu-2650 to Gly-2750. Transmembrane regions (helical) follow at residues Val-2752 to Trp-2772, Ser-2824 to Val-2844, Val-3009 to Leu-3029, Ala-3031 to Ile-3051, Ile-3063 to Val-3083, Val-3090 to Met-3110, and Leu-3115 to Val-3135. Residues Val-2752 to Val-3135 are HD2. Residues Leu-3149–Gln-3246 enclose the Nsp4C domain. One can recognise a Peptidase C30 domain in the interval Ser-3247 to Gln-3549. Catalysis depends on for 3CL-PRO activity residues His-3287 and Cys-3391. 7 consecutive transmembrane segments (helical) span residues Gly-3558–Val-3578, Thr-3588–Val-3608, Tyr-3614–Val-3634, Thr-3657–Leu-3677, Leu-3684–Gly-3704, Ile-3711–Ala-3731, and Ile-3755–Ser-3775. An HD3 region spans residues Gly-3558 to Ser-3775. A RdRp Nsp7 cofactor domain is found at Ser-3837–Gln-3925. A RdRp Nsp8 cofactor domain is found at Ala-3926 to Gln-4122. Residues Asn-4123–Gln-4232 form the Nsp9 ssRNA-binding domain. The ExoN/MTase coactivator domain maps to Ala-4233–Ser-4370. Residues Cys-4306, Cys-4309, His-4315, Cys-4322, Cys-4348, Cys-4351, Cys-4359, and Cys-4361 each coordinate Zn(2+). Zinc fingers lie at residues Cys-4306–Cys-4322 and Cys-4348–Cys-4361. A NiRAN domain is found at Phe-4375–Tyr-4630. The Mn(2+) site is built by Asn-4578 and Asp-4587. The 99-residue stretch at Arg-4631–Tyr-4729 folds into the Nsp12 Interface domain. Residues His-4660, Cys-4666, Cys-4671, Cys-4675, and Cys-4852 each contribute to the Zn(2+) site. One can recognise a Nsp12 RNA-dependent RNA polymerase domain in the interval Arg-4730–Gln-5297. The interval Ser-4732–Ala-4946 is rdRp Fingers N-ter. The interval Thr-4947–Pro-4985 is rdRp Palm N-ter. The RdRp catalytic domain maps to Pro-4977–Gly-5139. Positions Lys-4986–Gly-5044 are rdRp Fingers C-ter. Residues His-5007, Cys-5010, and Cys-5011 each coordinate Zn(2+). Residues Thr-5045 to Gln-5180 form a rdRp Palm C-ter region. Active-site residues include Ser-5124, Asp-5125, and Asp-5126. Residues His-5181–Gln-5297 are rdRp Thumb. The CV ZBD domain maps to Ser-5298 to Lys-5410. Cys-5302, Cys-5305, Cys-5313, Cys-5316, Cys-5323, Cys-5326, His-5330, His-5336, Cys-5347, Cys-5352, Cys-5369, and His-5372 together coordinate Zn(2+). One can recognise a (+)RNA virus helicase ATP-binding domain in the interval Ser-5553–Leu-5734. Residue Gly-5578–Ser-5585 coordinates ATP. In terms of domain architecture, (+)RNA virus helicase C-terminal spans Gly-5735–Asn-5904. The ExoN domain maps to Leu-5971–Cys-6186. Catalysis depends on residues Asp-5989, Glu-5991, and Glu-6090. Zn(2+) contacts are provided by Cys-6106, Cys-6109, Cys-6125, His-6128, His-6156, Cys-6160, and His-6163. Catalysis depends on residues His-6167 and Asp-6172. Cys-6178 serves as a coordination point for Zn(2+). An N7-MTase domain is found at Tyr-6195–Gln-6421. An S-adenosyl-L-methionine-binding site is contributed by Asp-6230–Ala-6236. Residues Cys-6308–Thr-6322 are gpppA-binding. Zn(2+) is bound by residues Cys-6346, Cys-6367, Cys-6378, and His-6381. Residues Ser-6422–Arg-6482 enclose the Nsp15 N-terminal oligomerization domain. Residues Ser-6483–Val-6603 form the AV-Nsp11N/CoV-Nsp15M domain. Positions Thr-6653–Pro-6792 constitute a NendoU domain. Catalysis depends on residues His-6683, His-6698, Lys-6738, Lys-6841, Asp-6925, Lys-6965, and Glu-6998. Residues Ala-6797–Val-7091 form the Nidovirus-type SAM-dependent 2'-O-MTase domain.

It belongs to the coronaviruses polyprotein 1ab family. In terms of assembly, interacts with host PHB and PHB2. As to quaternary structure, interacts with papain-like protease nsp3 and non-structural protein 6. Monomer. Homodimer. Only the homodimer shows catalytic activity. In terms of assembly, interacts with nsp8 and nsp12 to form the replication-transcription complex (RTC): nsp12, nsp7, two subunits of nsp8, and up to two subunits of nsp13. As to quaternary structure, interacts with nsp7, nsp13 and nsp12 to form the replication-transcription complex (RTC): nsp12, nsp7, two subunits of nsp8, and up to two subunits of nsp13. Interacts with nsp12. In terms of assembly, interacts with proofreading exoribonuclease nsp14 and 2'-O-methyltransferase nsp16; these interactions enhance nsp14 and nsp16 enzymatic activities. As to quaternary structure, interacts with nsp7 and nsp8 to form the replication-transcription complex (RTC): nsp12, nsp7, two subunits of nsp8, and up to two subunits of nsp13. Interacts with nsp9. Interacts with nsp8 to form the replication-transcription complex (RTC): nsp12, nsp7, two subunits of nsp8, and up to two subunits of nsp13. The cofactor is Mn(2+). Requires Mg(2+) as cofactor. Specific enzymatic cleavages in vivo by its own proteases yield mature proteins. 3CL-PRO and PL-PRO proteinases are autocatalytically processed.

Its subcellular location is the host membrane. The protein resides in the host cytoplasm. It is found in the host perinuclear region. It localises to the host endoplasmic reticulum-Golgi intermediate compartment. It catalyses the reaction RNA(n) + a ribonucleoside 5'-triphosphate = RNA(n+1) + diphosphate. It carries out the reaction ATP + H2O = ADP + phosphate + H(+). The enzyme catalyses Thiol-dependent hydrolysis of ester, thioester, amide, peptide and isopeptide bonds formed by the C-terminal Gly of ubiquitin (a 76-residue protein attached to proteins as an intracellular targeting signal).. The catalysed reaction is a 5'-end (N(7)-methyl 5'-triphosphoguanosine)-ribonucleoside in mRNA + S-adenosyl-L-methionine = a 5'-end (N(7)-methyl 5'-triphosphoguanosine)-(2'-O-methyl-ribonucleoside) in mRNA + S-adenosyl-L-homocysteine + H(+). It catalyses the reaction uridylyl-uridylyl-ribonucleotide-RNA = a 3'-end uridylyl-2',3'-cyclophospho-uridine-RNA + a 5'-end dephospho-ribonucleoside-RNA. It carries out the reaction a 5'-end diphospho-ribonucleoside in mRNA + GTP + H(+) = a 5'-end (5'-triphosphoguanosine)-ribonucleoside in mRNA + diphosphate. The enzyme catalyses a 5'-end (5'-triphosphoguanosine)-ribonucleoside in mRNA + S-adenosyl-L-methionine = a 5'-end (N(7)-methyl 5'-triphosphoguanosine)-ribonucleoside in mRNA + S-adenosyl-L-homocysteine. Its function is as follows. The replicase polyprotein of coronaviruses is a multifunctional protein: it contains the activities necessary for the transcription of negative stranded RNA, leader RNA, subgenomic mRNAs and progeny virion RNA as well as proteinases responsible for the cleavage of the polyprotein into functional products. In terms of biological role, inhibits host translation by interacting with the 40S ribosomal subunit. The nsp1-40S ribosome complex further induces an endonucleolytic cleavage near the 5'UTR of host mRNAs, targeting them for degradation. Viral mRNAs are not susceptible to nsp1-mediated endonucleolytic RNA cleavage thanks to the presence of a 5'-end leader sequence and are therefore protected from degradation. By suppressing host gene expression, nsp1 facilitates efficient viral gene expression in infected cells and evasion from host immune response. May play a role in the modulation of host cell survival signaling pathway by interacting with host PHB and PHB2. Indeed, these two proteins play a role in maintaining the functional integrity of the mitochondria and protecting cells from various stresses. Functionally, responsible for the cleavages located at the N-terminus of the replicase polyprotein. In addition, PL-PRO possesses a deubiquitinating/deISGylating activity and processes both 'Lys-48'- and 'Lys-63'-linked polyubiquitin chains from cellular substrates. Participates together with nsp4 in the assembly of virally-induced cytoplasmic double-membrane vesicles necessary for viral replication. Antagonizes innate immune induction of type I interferon by blocking the phosphorylation, dimerization and subsequent nuclear translocation of host IRF3. Also prevents host NF-kappa-B signaling. Its function is as follows. Participates in the assembly of virally-induced cytoplasmic double-membrane vesicles necessary for viral replication. In terms of biological role, cleaves the C-terminus of replicase polyprotein at 11 sites. Recognizes substrates containing the core sequence [ILMVF]-Q-|-[SGACN]. Also able to bind an ADP-ribose-1''-phosphate (ADRP). Plays a role in the initial induction of autophagosomes from host endoplasmic reticulum. Later, limits the expansion of these phagosomes that are no longer able to deliver viral components to lysosomes. Functionally, forms a hexadecamer with nsp8 (8 subunits of each) that may participate in viral replication by acting as a primase. Alternatively, may synthesize substantially longer products than oligonucleotide primers. Its function is as follows. Forms a hexadecamer with nsp7 (8 subunits of each) that may participate in viral replication by acting as a primase. Alternatively, may synthesize substantially longer products than oligonucleotide primers. In terms of biological role, forms a primer, NSP9-pU, which is utilized by the polymerase for the initiation of RNA chains. Interacts with ribosome signal recognition particle RNA (SRP). Together with NSP8, suppress protein integration into the cell membrane, thereby disrupting host immune defenses. Plays a pivotal role in viral transcription by stimulating both nsp14 3'-5' exoribonuclease and nsp16 2'-O-methyltransferase activities. Therefore plays an essential role in viral mRNAs cap methylation. Functionally, RNA-directed RNA polymerase that catalyzes the transcription of viral genomic and subgenomic RNAs. Acts in complex with nsp7 and nsp8 to transcribe both the minus and positive strands of genomic RNA. The kinase-like NiRAN domain of NSP12 attaches one or more nucleotides to the amino terminus of NSP9, forming a covalent RNA-protein intermediate that serves as transcription/replication primer. Subgenomic RNAs (sgRNAs) are formed by discontinuous transcription: The polymerase has the ability to pause at transcription-regulating sequences (TRS) and jump to the leader TRS, resulting in a major deletion. This creates a series of subgenomic RNAs that are replicated, transcribed and translated. In addition, Nsp12 is a subunit of the viral RNA capping enzyme that catalyzes the RNA guanylyltransferase reaction for genomic and sub-genomic RNAs. Subsequently, the NiRAN domain transfers RNA to GDP, and forms the core cap structure GpppA-RNA. Its function is as follows. Multi-functional protein with a zinc-binding domain in N-terminus displaying RNA and DNA duplex-unwinding activities with 5' to 3' polarity. Activity of helicase is dependent on magnesium. In terms of biological role, plays a role in viral RNA synthesis through two distinct activities. The N7-guanine methyltransferase activity plays a role in the formation of the cap structure GpppA-RNA. The proofreading exoribonuclease reduces the sensitivity of the virus to RNA mutagens during replication. This activity acts on both ssRNA and dsRNA in a 3'-5' direction. Plays a role in viral transcription/replication and prevents the simultaneous activation of host cell dsRNA sensors, such as MDA5/IFIH1, OAS, and PKR. Acts by degrading the 5'-polyuridines generated during replication of the poly(A) region of viral genomic and subgenomic RNAs. Catalyzes a two-step reaction in which a 2'3'-cyclic phosphate (2'3'-cP) is first generated by 2'-O transesterification, which is then hydrolyzed to a 3'-phosphate (3'-P). If not degraded, poly(U) RNA would hybridize with poly(A) RNA tails and activate host dsRNA sensors. Functionally, methyltransferase that mediates mRNA cap 2'-O-ribose methylation to the 5'-cap structure of viral mRNAs. N7-methyl guanosine cap is a prerequisite for binding of nsp16. Therefore plays an essential role in viral mRNAs cap methylation which is essential to evade immune system. The protein is Replicase polyprotein 1ab (rep) of Bos taurus (Bovine).